The following is a 131-amino-acid chain: Transcription antitermination protein NusB (131 aa).

Belongs to the NusB family.

In terms of biological role, involved in transcription antitermination. Required for transcription of ribosomal RNA (rRNA) genes. Binds specifically to the boxA antiterminator sequence of the ribosomal RNA (rrn) operons. The sequence is that of Transcription antitermination protein NusB from Campylobacter fetus subsp. fetus (strain 82-40).